The following is a 296-amino-acid chain: Isoprenyl transferase (296 aa).

Positions 1–11 (MATERNRRRKG) are enriched in basic residues. The disordered stretch occupies residues 1–29 (MATERNRRRKGSYPQLPPAPDDYPTFPDK). Aspartate 76 is an active-site residue. Position 76 (aspartate 76) interacts with Mg(2+). Residues 77–80 (GNGR), tryptophan 81, arginine 89, histidine 93, and 121–123 (STE) contribute to the substrate site. Catalysis depends on asparagine 124, which acts as the Proton acceptor. Residues tryptophan 125, arginine 127, arginine 244, and 250–252 (RAS) contribute to the substrate site. A Mg(2+)-binding site is contributed by glutamate 263.

The protein belongs to the UPP synthase family. Homodimer. The cofactor is Mg(2+).

Functionally, catalyzes the condensation of isopentenyl diphosphate (IPP) with allylic pyrophosphates generating different type of terpenoids. This Mycolicibacterium parafortuitum (Mycobacterium parafortuitum) protein is Isoprenyl transferase.